The chain runs to 217 residues: Ribosomal RNA large subunit methyltransferase E (217 aa).

Positions 64, 66, 92, 108, and 133 each coordinate S-adenosyl-L-methionine. Residue Lys-173 is the Proton acceptor of the active site.

It belongs to the class I-like SAM-binding methyltransferase superfamily. RNA methyltransferase RlmE family.

Its subcellular location is the cytoplasm. It catalyses the reaction uridine(2552) in 23S rRNA + S-adenosyl-L-methionine = 2'-O-methyluridine(2552) in 23S rRNA + S-adenosyl-L-homocysteine + H(+). In terms of biological role, specifically methylates the uridine in position 2552 of 23S rRNA at the 2'-O position of the ribose in the fully assembled 50S ribosomal subunit. The polypeptide is Ribosomal RNA large subunit methyltransferase E (Delftia acidovorans (strain DSM 14801 / SPH-1)).